The primary structure comprises 462 residues: GTPase Der (462 aa).

2 consecutive EngA-type G domains span residues 2–164 (QKVI…EEKV) and 198–369 (IRVG…KNYT). Residues 8–15 (GKPNVGKS), 55–59 (DSGGL), 116–119 (NKID), 204–211 (GRVNVGKS), 251–255 (DTAGI), and 315–318 (NKWD) each bind GTP. Positions 370 to 454 (QKIQTSKLNE…PIVLIPKKRG (85 aa)) constitute a KH-like domain.

This sequence belongs to the TRAFAC class TrmE-Era-EngA-EngB-Septin-like GTPase superfamily. EngA (Der) GTPase family. Associates with the 50S ribosomal subunit.

Functionally, GTPase that plays an essential role in the late steps of ribosome biogenesis. The protein is GTPase Der of Campylobacter concisus (strain 13826).